A 22-amino-acid chain; its full sequence is Cytin chain B (22 aa).

The protein belongs to the protease inhibitor I13 (potato type I serine protease inhibitor) family. As to quaternary structure, heterodimer of an A chain and a B chain, linked by a disulfide bond.

Its function is as follows. Inhibitor of chymotrypsin. In Theromyzon tessulatum (Duck leech), this protein is Cytin chain B.